Here is a 146-residue protein sequence, read N- to C-terminus: Hemoglobin subunit beta (146 aa).

N-acetylvaline is present on V1. The 145-residue stretch at 2–146 (DLTAEEKAAV…VANALAHKYH (145 aa)) folds into the Globin domain. Residue S44 is modified to Phosphoserine. At K59 the chain carries N6-acetyllysine. H63 contacts heme b. K82 carries the N6-acetyllysine modification. Residue H92 participates in heme b binding. S-nitrosocysteine is present on C93. K144 carries the N6-acetyllysine modification.

The protein belongs to the globin family. In terms of assembly, heterotetramer of two alpha chains and two beta chains. As to expression, red blood cells.

Functionally, involved in oxygen transport from the lung to the various peripheral tissues. The polypeptide is Hemoglobin subunit beta (HBB) (Rhinoceros unicornis (Greater Indian rhinoceros)).